The sequence spans 316 residues: Cytochrome c biogenesis protein CcsA (316 aa).

Transmembrane regions (helical) follow at residues 12 to 32 (HISL…LLVY), 44 to 64 (GMVA…IYSG), 71 to 91 (LYES…IPYF), 98 to 118 (LNVL…SGVL), 145 to 165 (LSYA…VILF), 222 to 242 (VISL…VWAN), 256 to 270 (TWAF…IYLH), and 283 to 303 (AIVA…VNLL).

Belongs to the CcmF/CycK/Ccl1/NrfE/CcsA family. In terms of assembly, may interact with Ccs1.

It localises to the plastid. It is found in the chloroplast thylakoid membrane. Functionally, required during biogenesis of c-type cytochromes (cytochrome c6 and cytochrome f) at the step of heme attachment. The polypeptide is Cytochrome c biogenesis protein CcsA (Ranunculus macranthus (Large buttercup)).